Reading from the N-terminus, the 206-residue chain is MKPQFITLDGIDGAGKSTNLAVIKAWFERRGLPVLFTREPGGTPVGEALREILLNPETKAGLRAETLMMFAARMQHIEEVILPALSDGIHVVSDRFTDATFAYQGGGRGMPSEDIEILEHWVQGGLRPDLTLLLDVPLEVSMARIGQAREKDRFEQEQADFFMRVRGVYLDRAAACPERYAVIDSNRSLDEVRNSIEKVLDGHFGC.

10 to 17 (GIDGAGKS) contacts ATP.

The protein belongs to the thymidylate kinase family.

The enzyme catalyses dTMP + ATP = dTDP + ADP. Phosphorylation of dTMP to form dTDP in both de novo and salvage pathways of dTTP synthesis. The sequence is that of Thymidylate kinase from Neisseria gonorrhoeae (strain ATCC 700825 / FA 1090).